Consider the following 445-residue polypeptide: MTIDAPELLEKLKISDADANGADIPGSTSAAANGMLKEDDDSDDDVAENTPAVAAENGTAKKKKNKKRKPKKKQPKVQTDPPSIPLSQLFPNNTYPKGEEVEYKDENRYRTTSEEKRHLDNLNSDFLSDYRQAAEAHRQVRQWAQRNIKPGQTLLEIANGIEDSARRLVGHDGLTEGDSLIAGMGFPTGLNIDNIVAHYSPNAGCKTVLAQNNVLKVDIGIHVGGRIVDSAFTMAFDPMYDNLLAAVKDATNTGVREAGIDVRVGELGGYIQEAMESYECEINGKTHPIKAIRNLCGHTILPYSIHGTKSVPFIKSNDMTKMEEGDVFAIETFGSTGSGRYVEGGEVSHYALRGDANRKDLTLSSARSLLTAIKKNFSTIPFCRRYLDRIGQEKYLLGLNYLVKSGIVEDYPPLNEKQGTYTAQFEHTILLRPTVKEVISRGDDY.

The tract at residues 14-115 (ISDADANGAD…ENRYRTTSEE (102 aa)) is disordered. Residues 38-47 (EDDDSDDDVA) are compositionally biased toward acidic residues. The span at 60–75 (AKKKKNKKRKPKKKQP) shows a compositional bias: basic residues. A compositionally biased stretch (polar residues) spans 85–95 (PLSQLFPNNTY). Over residues 97–115 (KGEEVEYKDENRYRTTSEE) the composition is skewed to basic and acidic residues. Substrate is bound at residue H198. D218, D229, and H298 together coordinate a divalent metal cation. A substrate-binding site is contributed by H306. E331 and E426 together coordinate a divalent metal cation.

The protein belongs to the peptidase M24A family. Methionine aminopeptidase eukaryotic type 2 subfamily. It depends on Co(2+) as a cofactor. The cofactor is Zn(2+). Mn(2+) is required as a cofactor. Requires Fe(2+) as cofactor.

The protein resides in the cytoplasm. The catalysed reaction is Release of N-terminal amino acids, preferentially methionine, from peptides and arylamides.. Its function is as follows. Cotranslationally removes the N-terminal methionine from nascent proteins. The N-terminal methionine is often cleaved when the second residue in the primary sequence is small and uncharged (Met-Ala-, Cys, Gly, Pro, Ser, Thr, or Val). The protein is Methionine aminopeptidase 2-3 of Neosartorya fischeri (strain ATCC 1020 / DSM 3700 / CBS 544.65 / FGSC A1164 / JCM 1740 / NRRL 181 / WB 181) (Aspergillus fischerianus).